The following is a 161-amino-acid chain: Protein lin-52 (161 aa).

The interval 137-161 (TGSASPRYLQPTPPKNVAEETTGSQ) is disordered.

It belongs to the lin-52 family. Component of the DRM complex, at least composed of lin-9, lin-35, lin-37, lin-52, lin-53, lin-54- dpl-1 and efl-1. Interacts with zft-11; the interaction is required to suppress the activation of non-neuronal genes in neurons.

It localises to the nucleus. Its function is as follows. Synthetic multivulva class B (synMuvB) protein. SynMuvB proteins are required to repress the induction of vulval development by Ras signaling and probably act by forming the multiprotein DRM complex that represses transcription. In association with the zinc finger protein ztf-11, negatively regulates the expression of non-neuronal genes during neurogenesis. This Caenorhabditis elegans protein is Protein lin-52.